Consider the following 252-residue polypeptide: Phosphoglycolate phosphatase (252 aa).

The active-site Nucleophile is the Asp-13. Positions 13, 15, and 192 each coordinate Mg(2+).

The protein belongs to the HAD-like hydrolase superfamily. CbbY/CbbZ/Gph/YieH family. In terms of assembly, monomer. Mg(2+) is required as a cofactor. Chloride serves as cofactor.

It catalyses the reaction 2-phosphoglycolate + H2O = glycolate + phosphate. It participates in organic acid metabolism; glycolate biosynthesis; glycolate from 2-phosphoglycolate: step 1/1. Functionally, specifically catalyzes the dephosphorylation of 2-phosphoglycolate. Is involved in the dissimilation of the intracellular 2-phosphoglycolate formed during the DNA repair of 3'-phosphoglycolate ends, a major class of DNA lesions induced by oxidative stress. The chain is Phosphoglycolate phosphatase from Salmonella paratyphi A (strain ATCC 9150 / SARB42).